We begin with the raw amino-acid sequence, 391 residues long: Heme A synthase (391 aa).

A run of 8 helical transmembrane segments spans residues 37-57 (IRLW…VGGL), 121-141 (RQLG…FLVA), 152-172 (LLAL…MVAS), 186-206 (LAVH…QALL), 229-249 (TTVL…VAGI), 298-318 (FLHR…WIFG), 332-352 (LLAL…LSAA), and 354-374 (WQVA…ILHA). H300 serves as a coordination point for heme. H360 serves as a coordination point for heme.

Belongs to the COX15/CtaA family. Type 2 subfamily. In terms of assembly, interacts with CtaB. Heme b is required as a cofactor.

Its subcellular location is the cell membrane. It catalyses the reaction Fe(II)-heme o + 2 A + H2O = Fe(II)-heme a + 2 AH2. The protein operates within porphyrin-containing compound metabolism; heme A biosynthesis; heme A from heme O: step 1/1. Functionally, catalyzes the conversion of heme O to heme A by two successive hydroxylations of the methyl group at C8. The first hydroxylation forms heme I, the second hydroxylation results in an unstable dihydroxymethyl group, which spontaneously dehydrates, resulting in the formyl group of heme A. The chain is Heme A synthase from Cereibacter sphaeroides (strain ATCC 17025 / ATH 2.4.3) (Rhodobacter sphaeroides).